We begin with the raw amino-acid sequence, 665 residues long: Cysteine-rich receptor-like protein kinase 26 (665 aa).

Positions 1-22 (MLSLLLPLISLLFQIQCFTVKS) are cleaved as a signal peptide. Over 23 to 283 (QPVPLNQICS…GDKNRGVPKA (261 aa)) the chain is Extracellular. 2 Gnk2-homologous domains span residues 26–129 (PLNQ…NRTI) and 135–244 (ISPH…PWRF). 6 N-linked (GlcNAc...) asparagine glycosylation sites follow: N33, N37, N67, N126, N146, and N266. The tract at residues 251-275 (DDPSSVPATPSRPPKNETRSVTQGD) is disordered. Residues 284–304 (LIFASASVAIVVLFIVLLVVF) traverse the membrane as a helical segment. Topologically, residues 305-665 (LKLRRKENIR…YNSNTELYPR (361 aa)) are cytoplasmic. In terms of domain architecture, Protein kinase spans 344–624 (FSLENKLGEG…VLMLDGHTIA (281 aa)). ATP is bound by residues 350–358 (LGEGGFGAV) and K372. The residue at position 417 (Y417) is a Phosphotyrosine. Catalysis depends on D469, which acts as the Proton acceptor. Residue S473 is modified to Phosphoserine. A Phosphothreonine modification is found at T510. Y518 carries the post-translational modification Phosphotyrosine. Residues 641–665 (SDSSSSLGHNAKTSNYNSNTELYPR) form a disordered region. The span at 647 to 665 (LGHNAKTSNYNSNTELYPR) shows a compositional bias: polar residues.

It belongs to the protein kinase superfamily. Ser/Thr protein kinase family. CRK subfamily.

It is found in the membrane. The catalysed reaction is L-seryl-[protein] + ATP = O-phospho-L-seryl-[protein] + ADP + H(+). It catalyses the reaction L-threonyl-[protein] + ATP = O-phospho-L-threonyl-[protein] + ADP + H(+). The sequence is that of Cysteine-rich receptor-like protein kinase 26 (CRK26) from Arabidopsis thaliana (Mouse-ear cress).